A 777-amino-acid polypeptide reads, in one-letter code: Semaphorin-4F (777 aa).

The signal sequence occupies residues 1-40 (MLARAERPRPGPRPPPVSLFPPPSSLLLLLLAMLSAPVCG). Over 41 to 667 (RVPRSVPRTS…PANRAHTVVG (627 aa)) the chain is Extracellular. The Sema domain occupies 48–516 (RTSLPISEAD…SHTEVTQVNT (469 aa)). N-linked (GlcNAc...) asparagine glycosylation is present at N70. C118 and C128 are disulfide-bonded. Residue N139 is glycosylated (N-linked (GlcNAc...) asparagine). Disulfide bonds link C146–C155, C279–C390, and C303–C349. An N-linked (GlcNAc...) asparagine glycan is attached at N515. Residues 518–569 (NCGRLQSCSECILAQDPVCAWSFRLDACVAHAGEHRGMVQDIESADVSSLCP) form the PSI domain. Intrachain disulfides connect C519/C536, C528/C545, and C593/C634. The 56-residue stretch at 586-641 (VGHVVLPCSPSSAWASCVWHQPSGVTSLTPRRDGLEVVVTPGAMGAYACECQEGGA) folds into the Ig-like C2-type domain. Residues 668-688 (AGLVGFFLGVLAASLTLLLIG) traverse the membrane as a helical segment. The Cytoplasmic segment spans residues 689–777 (RRQQRRRQRE…PLATCDETSI (89 aa)). Residues 703–742 (DKVGLDLGAPPSGTTSYSQDPPSPSPEDERLPLALGKRGS) form a disordered region. S725 and S727 each carry phosphoserine. The PDZ-binding motif lies at 775-777 (TSI).

Belongs to the semaphorin family. As to quaternary structure, interacts (via PDZ-binding motif) with DLG4/SAP90 (via PDZ domain 2); this interaction may promote translocation of DLG4/SAP90 to the membrane. Expressed throughout the adult brain, where it shows particularly strong expression in the hippocampus, corpus callosum, granular layer and deep nuclei of the cerebellum, and the mitral layer of the olfactory bulb (at protein level). At the cellular level, detected in neuronal precursors, postmitotic neurons, pyramidal neurons, and glial cells including mature oligodendocytes and oligodendroglial precursor cells (at protein level).

The protein resides in the cell membrane. The protein localises to the postsynaptic density. It localises to the perikaryon. Its subcellular location is the cell projection. It is found in the dendrite. Its function is as follows. Probable cell surface receptor that regulates oligodendroglial precursor cell migration. Might also regulate differentiation of oligodendroglial precursor cells. Has growth cone collapse activity against retinal ganglion-cell axons. The chain is Semaphorin-4F (Sema4f) from Mus musculus (Mouse).